A 386-amino-acid polypeptide reads, in one-letter code: Heat-inducible transcription repressor HrcA (386 aa).

Belongs to the HrcA family.

Negative regulator of class I heat shock genes (grpE-dnaK-dnaJ and groELS operons). Prevents heat-shock induction of these operons. The protein is Heat-inducible transcription repressor HrcA of Chlamydia felis (strain Fe/C-56) (Chlamydophila felis).